We begin with the raw amino-acid sequence, 770 residues long: Jhy protein (770 aa).

Disordered regions lie at residues 1–249 (MNKY…SKQY), 295–438 (TVQN…SFVS), 493–527 (HRHE…PQAE), 595–647 (ESQL…KRDV), and 708–740 (DYAK…KEGG). Basic and acidic residues predominate over residues 57–71 (SWSDIKDQIQDKDME). Residues 72-85 (PDSLEEDSPSETEE) show a composition bias toward acidic residues. Basic and acidic residues predominate over residues 112–134 (HQVEDKYSDLRYDPNWKNKREEG). Low complexity predominate over residues 218–229 (SGLSQYLKSSSS). Residues 295 to 314 (TVQNDKEVENTFMDPEDKWH) show a composition bias toward basic and acidic residues. Residues 340-354 (RGQSSDAANGQQPSR) show a composition bias toward polar residues. Residues 355–370 (RTAKARVRKQRKHQKG) are compositionally biased toward basic residues. Low complexity predominate over residues 383–398 (QNNQNNPFQQPQNQRQ). Residues 410–438 (AQTNASNPNLQDARTLTHNPKVTSDSFVS) are compositionally biased toward polar residues. A compositionally biased stretch (basic and acidic residues) spans 493–509 (HRHESPSQRAPQSDHHM). 2 stretches are compositionally biased toward basic residues: residues 510-521 (NTHRSTKTKKPA) and 625-642 (GKRH…LKGY).

As to expression, expressed in the brain, specifically in hypothalamus, pineal gland, and ependymal cells of the aqueduct of Sylvius, as well as in the choroid plexus of the third ventricle. Expressed in the ependymal cells lining the lateral ventricles (at protein level).

Required for the normal development of cilia in brain ependymal cells lining the ventricular surfaces. This chain is Jhy protein, found in Mus musculus (Mouse).